An 89-amino-acid chain; its full sequence is Small ribosomal subunit protein uS15 (89 aa).

The protein belongs to the universal ribosomal protein uS15 family. In terms of assembly, part of the 30S ribosomal subunit. Forms a bridge to the 50S subunit in the 70S ribosome, contacting the 23S rRNA.

Functionally, one of the primary rRNA binding proteins, it binds directly to 16S rRNA where it helps nucleate assembly of the platform of the 30S subunit by binding and bridging several RNA helices of the 16S rRNA. Its function is as follows. Forms an intersubunit bridge (bridge B4) with the 23S rRNA of the 50S subunit in the ribosome. The polypeptide is Small ribosomal subunit protein uS15 (Limosilactobacillus fermentum (strain NBRC 3956 / LMG 18251) (Lactobacillus fermentum)).